We begin with the raw amino-acid sequence, 100 residues long: Small ribosomal subunit protein uS14 (100 aa).

Belongs to the universal ribosomal protein uS14 family. Part of the 30S ribosomal subunit. Contacts proteins S3 and S10.

Functionally, binds 16S rRNA, required for the assembly of 30S particles and may also be responsible for determining the conformation of the 16S rRNA at the A site. The chain is Small ribosomal subunit protein uS14 from Trichormus variabilis (strain ATCC 29413 / PCC 7937) (Anabaena variabilis).